The primary structure comprises 322 residues: Replication factor C small subunit 2 (322 aa).

44–51 (GPPGTGKT) serves as a coordination point for ATP.

It belongs to the activator 1 small subunits family. RfcS subfamily. As to quaternary structure, heteromultimer composed of small subunits (RfcS) and large subunits (RfcL).

In terms of biological role, part of the RFC clamp loader complex which loads the PCNA sliding clamp onto DNA. The chain is Replication factor C small subunit 2 from Pyrobaculum arsenaticum (strain DSM 13514 / JCM 11321 / PZ6).